A 115-amino-acid chain; its full sequence is Somatostatin-2 (115 aa).

The signal sequence occupies residues 1–18; the sequence is MKVCRIHCALALLGLALA. Positions 19 to 87 are excised as a propeptide; the sequence is ICSQGAASQP…KEDLRVELER (69 aa). C104 and C115 are disulfide-bonded.

Belongs to the somatostatin family.

The protein localises to the secreted. In terms of biological role, somatostatin inhibits the release of somatotropin. This is Somatostatin-2 (sst2) from Oncorhynchus mykiss (Rainbow trout).